A 448-amino-acid chain; its full sequence is Trigger factor (448 aa).

Residues 172–257 (GDRVTVDFVG…MKKIEWPHMP (86 aa)) form the PPIase FKBP-type domain.

This sequence belongs to the FKBP-type PPIase family. Tig subfamily.

Its subcellular location is the cytoplasm. The catalysed reaction is [protein]-peptidylproline (omega=180) = [protein]-peptidylproline (omega=0). In terms of biological role, involved in protein export. Acts as a chaperone by maintaining the newly synthesized protein in an open conformation. Functions as a peptidyl-prolyl cis-trans isomerase. In Burkholderia vietnamiensis (strain G4 / LMG 22486) (Burkholderia cepacia (strain R1808)), this protein is Trigger factor.